The sequence spans 79 residues: Exodeoxyribonuclease 7 small subunit (79 aa).

This sequence belongs to the XseB family. As to quaternary structure, heterooligomer composed of large and small subunits.

It localises to the cytoplasm. The enzyme catalyses Exonucleolytic cleavage in either 5'- to 3'- or 3'- to 5'-direction to yield nucleoside 5'-phosphates.. Its function is as follows. Bidirectionally degrades single-stranded DNA into large acid-insoluble oligonucleotides, which are then degraded further into small acid-soluble oligonucleotides. The protein is Exodeoxyribonuclease 7 small subunit of Dechloromonas aromatica (strain RCB).